Reading from the N-terminus, the 287-residue chain is 4-hydroxybenzoate octaprenyltransferase (287 aa).

9 consecutive transmembrane segments (helical) span residues 7-27, 30-50, 94-114, 118-138, 142-162, 167-187, 209-229, 235-255, and 266-286; these read FISY…LLLW, LWAL…LIFV, VAVA…LNAF, LSVL…FFAM, VLGI…LDFI, WFLF…YAMV, VVVI…VAQL, YFLV…KLVS, and FRHN…GLGV.

This sequence belongs to the UbiA prenyltransferase family. Mg(2+) serves as cofactor.

Its subcellular location is the cell inner membrane. The catalysed reaction is all-trans-octaprenyl diphosphate + 4-hydroxybenzoate = 4-hydroxy-3-(all-trans-octaprenyl)benzoate + diphosphate. It participates in cofactor biosynthesis; ubiquinone biosynthesis. In terms of biological role, catalyzes the prenylation of para-hydroxybenzoate (PHB) with an all-trans polyprenyl group. Mediates the second step in the final reaction sequence of ubiquinone-8 (UQ-8) biosynthesis, which is the condensation of the polyisoprenoid side chain with PHB, generating the first membrane-bound Q intermediate 3-octaprenyl-4-hydroxybenzoate. This Polynucleobacter necessarius subsp. necessarius (strain STIR1) protein is 4-hydroxybenzoate octaprenyltransferase.